Here is a 207-residue protein sequence, read N- to C-terminus: MAKHEKISEAVVRRLPIYLRYLSYLQQVEVTTVSSQQMGKNLDVNPAQIRKDLAAFGDFGKKGIGYDVDYLVEKIREILKLTDEIRVALVGAGHLGHAISNYNAYLKDNMRIAAIFDNNPEKQGKKVAGIPIQPLSELEETIVNKQIKLAIITVPAPAAQSVCDQLTQAGIKGILNFAPTTIRAGKDVRIHYADVTSNLQSLAYYLT.

The H-T-H motif DNA-binding region spans 17–56 (IYLRYLSYLQQVEVTTVSSQQMGKNLDVNPAQIRKDLAAF). 91–96 (GAGHLG) contacts NAD(+).

The protein belongs to the transcriptional regulatory Rex family. Homodimer.

It localises to the cytoplasm. Modulates transcription in response to changes in cellular NADH/NAD(+) redox state. The protein is Redox-sensing transcriptional repressor Rex of Brevibacillus brevis (strain 47 / JCM 6285 / NBRC 100599).